Reading from the N-terminus, the 724-residue chain is Semaphorin-2A (724 aa).

An N-terminal signal peptide occupies residues 1-25 (MSLLQLSPLLALLLLLCSSVSETAA). Residues 45-522 (QGNNNYGKHG…TDHRIKQIDL (478 aa)) enclose the Sema domain. N-linked (GlcNAc...) asparagine glycosylation is present at Asn-95. Residues Cys-118 and Cys-129 are joined by a disulfide bond. 4 N-linked (GlcNAc...) asparagine glycosylation sites follow: Asn-163, Asn-190, Asn-229, and Asn-314. Intrachain disulfides connect Cys-291–Cys-399 and Cys-315–Cys-358. N-linked (GlcNAc...) asparagine glycosylation is present at Asn-401. Intrachain disulfides connect Cys-525–Cys-541 and Cys-535–Cys-550. The 112-residue stretch at 552–663 (PYELDLLQDV…LCSYNITVDA (112 aa)) folds into the Ig-like C2-type domain. N-linked (GlcNAc...) asparagine glycosylation is present at Asn-563. A disulfide bridge links Cys-590 with Cys-647. Asn-658, Asn-670, and Asn-708 each carry an N-linked (GlcNAc...) asparagine glycan.

This sequence belongs to the semaphorin family. Interacts with PlexB. Transiently expressed by a single large muscle during motoneuron outgrowth and synapse formation.

Its subcellular location is the secreted. In terms of biological role, ligand for transmembrane receptor PlexB. Plays a role in growth cone guidance. Required for both proper adult behavior and survival. Can function as a selective target-derived signal that inhibits the formation of specific synaptic terminal arbors. Function in neurons is essential for adult survival, motor neuron survival, and is important for climbing behavior and activity. During embryogenesis, plays an important role in correct salivary gland positioning. This Drosophila melanogaster (Fruit fly) protein is Semaphorin-2A.